A 128-amino-acid polypeptide reads, in one-letter code: Fluoride-specific ion channel FluC (128 aa).

The next 4 helical transmembrane spans lie at 7–29 (LNFI…LGLR), 36–57 (PWGT…VALI), 65–94 (AWIR…DMLE), and 98–126 (YATA…VRLL). Position 43 (Asn-43) interacts with fluoride. Positions 77 and 80 each coordinate Na(+). Residues Tyr-104, Ser-108, and Ser-112 each coordinate fluoride.

This sequence belongs to the fluoride channel Fluc/FEX (TC 1.A.43) family. As to quaternary structure, homodimer.

Its subcellular location is the cell inner membrane. It carries out the reaction fluoride(in) = fluoride(out). With respect to regulation, na(+) is not transported, but it plays an essential structural role and its presence is essential for fluoride channel function. The Na(+)-binding site is specific for Na(+) over most other cations including K(+) and Mg(2+). Fluoride efflux is inhibited by Li(2+). Functionally, fluoride-specific ion channel. Important for reducing fluoride concentration in the cell, thus reducing its toxicity. Is highly specific for fluoride ions and cannot transport chloride ions. The protein is Fluoride-specific ion channel FluC of Bordetella pertussis (strain Tohama I / ATCC BAA-589 / NCTC 13251).